The following is a 341-amino-acid chain: GTP 3',8-cyclase (341 aa).

The region spanning 11–231 is the Radical SAM core domain; that stretch reads KRERPLRDLR…DLINQHMPTE (221 aa). Residue arginine 20 participates in GTP binding. Residues cysteine 27 and cysteine 31 each contribute to the [4Fe-4S] cluster site. Residue tyrosine 33 participates in S-adenosyl-L-methionine binding. Cysteine 34 is a [4Fe-4S] cluster binding site. Arginine 75 serves as a coordination point for GTP. Position 79 (glycine 79) interacts with S-adenosyl-L-methionine. Threonine 106 lines the GTP pocket. Serine 130 lines the S-adenosyl-L-methionine pocket. Lysine 167 is a GTP binding site. Methionine 201 is a binding site for S-adenosyl-L-methionine. Cysteine 265 and cysteine 268 together coordinate [4Fe-4S] cluster. 270 to 272 serves as a coordination point for GTP; sequence RAR. Residue cysteine 282 coordinates [4Fe-4S] cluster.

The protein belongs to the radical SAM superfamily. MoaA family. As to quaternary structure, monomer and homodimer. [4Fe-4S] cluster serves as cofactor.

It carries out the reaction GTP + AH2 + S-adenosyl-L-methionine = (8S)-3',8-cyclo-7,8-dihydroguanosine 5'-triphosphate + 5'-deoxyadenosine + L-methionine + A + H(+). Its pathway is cofactor biosynthesis; molybdopterin biosynthesis. Catalyzes the cyclization of GTP to (8S)-3',8-cyclo-7,8-dihydroguanosine 5'-triphosphate. The polypeptide is GTP 3',8-cyclase (Bacillus velezensis (strain DSM 23117 / BGSC 10A6 / LMG 26770 / FZB42) (Bacillus amyloliquefaciens subsp. plantarum)).